The chain runs to 282 residues: 5'-nucleotidase SurE (282 aa).

Residues D12, D13, S43, and N98 each contribute to the a divalent metal cation site.

This sequence belongs to the SurE nucleotidase family. The cofactor is a divalent metal cation.

It is found in the cytoplasm. The enzyme catalyses a ribonucleoside 5'-phosphate + H2O = a ribonucleoside + phosphate. In terms of biological role, nucleotidase that shows phosphatase activity on nucleoside 5'-monophosphates. This Hyperthermus butylicus (strain DSM 5456 / JCM 9403 / PLM1-5) protein is 5'-nucleotidase SurE.